The chain runs to 164 residues: Pathogenesis-related protein PRB1-2 (164 aa).

An N-terminal signal peptide occupies residues 1 to 24; sequence MQTPKLAILLALAMAAAMVNLSQA. At glutamine 25 the chain carries Pyrrolidone carboxylic acid. One can recognise an SCP domain in the interval 34–152; that stretch reads PHNAARSAVG…NRGVFITCNY (119 aa). 3 cysteine pairs are disulfide-bonded: cysteine 68-cysteine 140, cysteine 113-cysteine 119, and cysteine 135-cysteine 150.

This sequence belongs to the CRISP family.

Probably involved in the defense reaction of plants against pathogens. This is Pathogenesis-related protein PRB1-2 from Hordeum vulgare (Barley).